The following is a 95-amino-acid chain: MVLRILLRYLLHNEQLVQRLADSYPFRRAAQLTASLILRGKSLGQESLELMSTSSLLRKLVERLSQTGEQAKQFSTEKAKRLEEAIKDMKRKQGL.

In Ixodes scapularis (Black-legged tick), this protein is Protein NCBP2AS2 homolog.